The primary structure comprises 367 residues: uncharacterized protein (367 aa).

The FAD-binding PCMH-type domain maps to 1-96 (ITLHRLAELV…LTATLQLQPV (96 aa)).

This sequence to M.tuberculosis Rv3790.

This is an uncharacterized protein from Streptomyces coelicolor.